A 207-amino-acid polypeptide reads, in one-letter code: Holliday junction branch migration complex subunit RuvA (207 aa).

The domain I stretch occupies residues 1–63 (MIGMLKGRVE…QDAITLFGFL (63 aa)). The tract at residues 64-142 (DARSKRMFLQ…VDKIETGEPT (79 aa)) is domain II. The flexible linker stretch occupies residues 143–153 (STQRIPTDKGV). The segment at 153–207 (VEQVVEGLMSLGWKQADAQQAVDSVISSSGIALPLEEGNVPTVLRLALTSLDRGR) is domain III.

This sequence belongs to the RuvA family. Homotetramer. Forms an RuvA(8)-RuvB(12)-Holliday junction (HJ) complex. HJ DNA is sandwiched between 2 RuvA tetramers; dsDNA enters through RuvA and exits via RuvB. An RuvB hexamer assembles on each DNA strand where it exits the tetramer. Each RuvB hexamer is contacted by two RuvA subunits (via domain III) on 2 adjacent RuvB subunits; this complex drives branch migration. In the full resolvosome a probable DNA-RuvA(4)-RuvB(12)-RuvC(2) complex forms which resolves the HJ.

It is found in the cytoplasm. Its function is as follows. The RuvA-RuvB-RuvC complex processes Holliday junction (HJ) DNA during genetic recombination and DNA repair, while the RuvA-RuvB complex plays an important role in the rescue of blocked DNA replication forks via replication fork reversal (RFR). RuvA specifically binds to HJ cruciform DNA, conferring on it an open structure. The RuvB hexamer acts as an ATP-dependent pump, pulling dsDNA into and through the RuvAB complex. HJ branch migration allows RuvC to scan DNA until it finds its consensus sequence, where it cleaves and resolves the cruciform DNA. This chain is Holliday junction branch migration complex subunit RuvA, found in Bifidobacterium animalis subsp. lactis (strain AD011).